We begin with the raw amino-acid sequence, 330 residues long: tRNA U34 carboxymethyltransferase (330 aa).

Residues lysine 91, tryptophan 105, lysine 110, glycine 130, 152–154 (DPS), 181–182 (IE), methionine 196, tyrosine 200, and arginine 315 contribute to the carboxy-S-adenosyl-L-methionine site.

The protein belongs to the class I-like SAM-binding methyltransferase superfamily. CmoB family. As to quaternary structure, homotetramer.

It catalyses the reaction carboxy-S-adenosyl-L-methionine + 5-hydroxyuridine(34) in tRNA = 5-carboxymethoxyuridine(34) in tRNA + S-adenosyl-L-homocysteine + H(+). Catalyzes carboxymethyl transfer from carboxy-S-adenosyl-L-methionine (Cx-SAM) to 5-hydroxyuridine (ho5U) to form 5-carboxymethoxyuridine (cmo5U) at position 34 in tRNAs. In Shewanella denitrificans (strain OS217 / ATCC BAA-1090 / DSM 15013), this protein is tRNA U34 carboxymethyltransferase.